Consider the following 360-residue polypeptide: Protein phosphatase 1 regulatory subunit 7 (360 aa).

Residues 1–64 form a disordered region; the sequence is MAAERGAGQQ…GEEDPEEEHE (64 aa). Alanine 2 is subject to N-acetylalanine. Phosphoserine is present on residues serine 12, serine 24, serine 27, serine 44, and serine 47. Residues 17–34 are compositionally biased toward basic and acidic residues; it reads EVDRRVESEESGDEEGKK. The span at 53–63 shows a compositional bias: acidic residues; the sequence is ERGEEDPEEEH. 11 LRR repeats span residues 77–98, 99–120, 121–142, 143–164, 165–186, 187–208, 209–230, 231–252, 253–274, 275–296, and 297–318; these read DAEDVDLNHYRIGKIEGFEVLK, KVKTLCLRQNLIKCIENLEELQ, SLRELDLYDNQIKKIENLEALT, ELEILDISFNLLRNIEGVDKVT, QLKKLFLVNNKISKIENLSNLH, QLQMLELGSNRIRAIENIDTLT, NLESLFLGKNKITKLQNLDALT, NLTVLSMQSNRLTKIEGLQNLV, NLQELYLSHNGIEVIEGLENNN, KLTMLDIASNRIKKIENISHLT, and EPQEFWMNDNLLESWSDLDELK. The residue at position 322 (serine 322) is a Phosphoserine. The LRRCT domain maps to 331-360; that stretch reads NPLQKDPQYRRKVMLALPSVRQIDATFVRF.

Belongs to the SDS22 family. In terms of assembly, interacts with PPP1CA, PPP1CB and PPP1CC/PPP1G.

It is found in the nucleus. Its function is as follows. Regulatory subunit of protein phosphatase 1. In Pongo abelii (Sumatran orangutan), this protein is Protein phosphatase 1 regulatory subunit 7 (PPP1R7).